Here is a 129-residue protein sequence, read N- to C-terminus: MLVSCAMRLHSGVFPDYAEKLPQEEKMEKEDSFPQRVWQIVAAIPEGYVTTYGDVAKLAGSPRAARQVGGVLKRLPEGSTLPWHRVVNRHGTISLTGPDLQRQRQALLAEGVMVSGSGQIDLQRYRWNY.

The protein belongs to the MGMT family. ATL subfamily. In terms of assembly, interacts with HelD and UvrA.

Functionally, involved in DNA damage recognition. Binds DNA containing O(6)-methylguanine and larger O(6)-alkylguanine adducts, and to double-stranded DNA that contains an AP (apurinic/apyrimidinic) site. Binds to the damaged base and flips the base out of the DNA duplex into an extrahelical conformation, which allows processing by repair proteins. Works in partnership with the nucleotide excision repair (NER) pathway to enhance the repair of the O(6)-alkylguanine adducts larger than the methyl adduct. Also prevents methyl-directed mismatch repair (MMR)-mediated attack of the O(6)-alkylguanine:T mispairs for the larger alkyl groups. This is DNA base-flipping protein from Escherichia coli (strain K12).